The chain runs to 412 residues: L-cysteine:1D-myo-inositol 2-amino-2-deoxy-alpha-D-glucopyranoside ligase (412 aa).

C43 serves as a coordination point for Zn(2+). L-cysteinyl-5'-AMP-binding positions include C43 to T46, T58, and N81 to T83. Positions I45–H55 match the 'HIGH' region motif. Residues E186–P191 carry the 'ERGGDP' region motif. W227 is a binding site for L-cysteinyl-5'-AMP. C231 contacts Zn(2+). L-cysteinyl-5'-AMP is bound at residue G249–D251. H256 provides a ligand contact to Zn(2+). I283 contributes to the L-cysteinyl-5'-AMP binding site. The short motif at K289–S293 is the 'KMSKS' region element.

The protein belongs to the class-I aminoacyl-tRNA synthetase family. MshC subfamily. In terms of assembly, monomer. Requires Zn(2+) as cofactor.

It carries out the reaction 1D-myo-inositol 2-amino-2-deoxy-alpha-D-glucopyranoside + L-cysteine + ATP = 1D-myo-inositol 2-(L-cysteinylamino)-2-deoxy-alpha-D-glucopyranoside + AMP + diphosphate + H(+). Functionally, catalyzes the ATP-dependent condensation of GlcN-Ins and L-cysteine to form L-Cys-GlcN-Ins. This is L-cysteine:1D-myo-inositol 2-amino-2-deoxy-alpha-D-glucopyranoside ligase from Salinispora arenicola (strain CNS-205).